A 383-amino-acid chain; its full sequence is Chaperone protein DnaJ (383 aa).

The region spanning 5–70 is the J domain; the sequence is DYYEVLGVAK…EKRAAYDRFG (66 aa). The CR-type zinc finger occupies 139–217; the sequence is GKTETIRIPT…CSGAGRVNRE (79 aa). Zn(2+) is bound by residues Cys-152, Cys-155, Cys-169, Cys-172, Cys-191, Cys-194, Cys-205, and Cys-208. CXXCXGXG motif repeat units lie at residues 152–159, 169–176, 191–198, and 205–212; these read CEACSGTG, CSTCGGYG, CPNCHGRG, and CTACSGAG.

This sequence belongs to the DnaJ family. Homodimer. Requires Zn(2+) as cofactor.

It is found in the cytoplasm. In terms of biological role, participates actively in the response to hyperosmotic and heat shock by preventing the aggregation of stress-denatured proteins and by disaggregating proteins, also in an autonomous, DnaK-independent fashion. Unfolded proteins bind initially to DnaJ; upon interaction with the DnaJ-bound protein, DnaK hydrolyzes its bound ATP, resulting in the formation of a stable complex. GrpE releases ADP from DnaK; ATP binding to DnaK triggers the release of the substrate protein, thus completing the reaction cycle. Several rounds of ATP-dependent interactions between DnaJ, DnaK and GrpE are required for fully efficient folding. Also involved, together with DnaK and GrpE, in the DNA replication of plasmids through activation of initiation proteins. The protein is Chaperone protein DnaJ of Methylorubrum populi (strain ATCC BAA-705 / NCIMB 13946 / BJ001) (Methylobacterium populi).